Consider the following 12345-residue polypeptide: Muscle-specific protein 300 kDa (12345 aa).

2 disordered regions span residues 1–68 (MADS…STVT) and 121–152 (WSDG…DAEN). At 1 to 12295 (MADSGGPGSK…GARFLGRVAR (12295 aa)) the chain is on the cytoplasmic side. Positions 19 to 28 (AGGGGAGAAG) are enriched in gly residues. Positions 45 to 60 (EQKSSREQVLEEEKSQ) are enriched in basic and acidic residues. An LRR 1 repeat occupies 249–273 (FKELENFLEGERTVREVPSADGVRT). Disordered stretches follow at residues 295–325 (EGYV…RSVD), 387–488 (TVQV…RKLI), and 504–526 (GKSN…GRPA). A compositionally biased stretch (low complexity) spans 299-321 (SPRDSPSWSRSSYSSERSSVTPP). Composition is skewed to polar residues over residues 387-404 (TVQV…STPQ) and 414-434 (TTKT…QTGP). Residues 462-484 (TITSTTTKSTSSSTSATSSSSTS) are compositionally biased toward low complexity. Over residues 511–520 (NDIDIDNDSD) the composition is skewed to acidic residues. 2 consecutive Calponin-homology (CH) domains span residues 630-737 (RVQK…LYFQ) and 777-882 (QGAR…HKYP). The LRR 2 repeat unit spans residues 823-847 (LVNLAELKKTSNRQRLETAFDVAES). The TPR 1 repeat unit spans residues 919 to 952 (SSFPRDFGEYLLARSEVDAHLAAYNRLKQLIESQ). LRR repeat units follow at residues 1089–1112 (CCLI…YGHE), 1389–1411 (HLFH…IHQW), and 1616–1642 (LKDV…ILQR). A TPR 2 repeat occupies 1603 to 1636 (LEFRLDENAFYQSLKDVEKELQLEQQALNRNEDV). The stretch at 1903-1935 (TGWNQAYTETSDKLQALKGTQAVWSEFVDQKND) is one HAT 1 repeat. LRR repeat units lie at residues 2087–2109 (KQLD…IAEA) and 2558–2581 (QQQI…FGQA). Residues 2109–2233 (AKRLKGEITK…SRWTAVHENA (125 aa)) enclose the Calponin-homology (CH) 3 domain. Residues 2663–2696 (ADRIQKYNLISQALREYADSKDKFSKELKKAEDL) form a TPR 3 repeat. The interval 2699–2724 (AIPQQPRDETELHQASEKTRKTMEQL) is disordered. The segment covering 2704-2724 (PRDETELHQASEKTRKTMEQL) has biased composition (basic and acidic residues). 3 LRR repeats span residues 2728–2751 (KLSL…IGEP), 2935–2959 (CRAL…VDEL), and 3030–3053 (SSDK…IDDC). The stretch at 2894-2962 (EQELRRRSKE…KQKVDELRNL (69 aa)) forms a coiled coil. The stretch at 3110 to 3207 (LWSQYEQSNE…AVSKALTSYI (98 aa)) is one Spectrin 1 repeat. One copy of the TPR 4 repeat lies at 3346 to 3379 (KAKVPTTDELYPTLATKKAALQNYKTQLQEITLH). 4 LRR repeats span residues 3370 to 3393 (KTQL…AVTL), 3437 to 3462 (LEKA…TFEK), 3530 to 3556 (LVKL…WMKN), and 3611 to 3634 (NLKL…SIAK). The Spectrin 2 repeat unit spans residues 3539 to 3633 (KWDEFDTIIE…LKNLCKESIA (95 aa)). The TPR 5 repeat unit spans residues 3629-3662 (KESIAKYVNYVKDHESFDKDFDSFKQNLQSSVDE). The stretch at 3706–3739 (KLYGHTSPEGREIIRQQLRALRTLWDNYTDDLNS) is one HAT 2 repeat. One copy of the LRR 15 repeat lies at 3748–3771 (LLQFNEFSIAQDQLTKWLKDVDKA). The stretch at 4177 to 4273 (SYQDILNQTV…YDQVGQDCAK (97 aa)) is one Spectrin 3 repeat. Residues 4360–4393 (EVMARDLANLHADFEKFGASLSDVKSGLENRLQQ) form a TPR 6 repeat. The stretch at 4371 to 4403 (ADFEKFGASLSDVKSGLENRLQQWNDYEINLDR) is one HAT 3 repeat. Residues 4611–4701 (FDEIADSLKS…GKLQKRAQNY (91 aa)) form a Spectrin 4 repeat. 2 LRR repeats span residues 4654–4676 (NDIN…LPEK) and 4742–4763 (EQIS…LADE). The stretch at 4799–4830 (EWESLLTTISSTIEAIEARLQHWSEYEQLRDQ) is one HAT 4 repeat. The stretch at 4820–4919 (HWSEYEQLRD…VKELNNRWQQ (100 aa)) is one Spectrin 5 repeat. The stretch at 4839 to 4863 (DNNLHAIDLKEDLPKKRAQLDALKA) is one LRR 18 repeat. One copy of the HAT 5 repeat lies at 4894-4926 (ASGPELVTKYQQIFHKVKELNNRWQQYVTSHED). LRR repeat units follow at residues 5266–5289 (QIDI…EKQV) and 5333–5357 (SSVY…RDQH). The stretch at 5645-5678 (SAEPEDCEIIEQEVALLQEEFDAYREALNKAKDY) is one TPR 7 repeat. LRR repeat units lie at residues 5761–5784 (SNAI…VMRR), 5820–5843 (PGTL…FETG), and 5979–6002 (TKFD…VNSH). One copy of the Spectrin 6 repeat lies at 5791 to 5895 (EHQQHHSLYE…DLNDVRQKLA (105 aa)). One copy of the HAT 6 repeat lies at 6088 to 6120 (SEWETLQTISRDARSSLESCLAAWQTFLQKFNK). 2 Spectrin repeats span residues 6321 to 6405 (RWND…DKLK) and 6424 to 6530 (AYHQ…RLLE). 2 coiled-coil regions span residues 6356–6397 (MKTL…VNRL) and 6454–6484 (REQT…LNAK). An LRR 24 repeat occupies 6363 to 6387 (YKTLSNELKLKGNELEQLQSEARDL). The TPR 8 repeat unit spans residues 6522–6555 (VQIKNRLLESLAKFQEYEDTLDSIMRNLETYEPI). LRR repeat units lie at residues 6531–6554 (SLAK…TYEP) and 6560–6587 (LDAP…LNNE). Positions 6567–6597 (LELAQNQLRCAQEMQNKLNNEKSRLAAAVQA) form a coiled coil. Residues 6631 to 6657 (EDLLDQKPPPKTRSSTGGVSTDDDKDE) are disordered. The TPR 9 repeat unit spans residues 6660 to 6695 (VEIQVELSDVNEALLDPIAHERVKNYRRIVRLNSAH). The LRR 27 repeat unit spans residues 7004–7026 (SALRNLNTENRNLSGVLKAELDR). Residues 7161 to 7195 (EMETATEGELRTTSLPVLEEQLAHYKKLLSDAENK) form a TPR 10 repeat. LRR repeat units lie at residues 7219 to 7242 (LKLN…IDDR), 7300 to 7318 (KELK…DDLP), 7319 to 7339 (ELQS…DQLA), and 7340 to 7361 (HLRQ…IIAF). A coiled-coil region spans residues 7419-7457 (KNSITEQLQSLKNQLQNLRKAVESQRQKHQLQLESHKKM). The LRR 32 repeat unit spans residues 7524–7547 (SSLLEMLSEGRSLVASLPHELEER). An HAT 7 repeat occupies 7644–7676 (TKLTNTLANAKTQQSELEKEAERWREYQQSIDR). A TPR 11 repeat occupies 7654-7687 (KTQQSELEKEAERWREYQQSIDRVKATIERTKFV). 3 LRR repeats span residues 7692–7714 (QNLA…VQSQ), 7752–7777 (QDLV…GFEN), and 7816–7840 (LREE…ILTF). The TPR 12 repeat unit spans residues 7759 to 7792 (EQRRDNLQQLAEHWDGFENSLHAWEKALGRLEDK). Positions 7799-7935 (TVRSRRHLED…NSQVQQAAEE (137 aa)) form a coiled coil. One copy of the TPR 13 repeat lies at 7878-7911 (SKDLEEIEQVFRRISQLQDKLNALHEQLQSVHVY). LRR repeat units follow at residues 8178 to 8201 (KISV…EWDQ), 8238 to 8264 (EKTL…HFRN), 8298 to 8321 (EQTL…IIQE), and 8354 to 8377 (DELL…SLDG). A TPR 14 repeat occupies 8431–8464 (QQGITMIANAMHGQKKRQQEIDEYQQHLLELEQW). Residues 8534 to 8557 (EQLQSIITILREQVTVATKRIFTI) form an LRR 40 repeat. 6 disordered regions span residues 8583–8616 (IKPP…EEEI), 8966–9023 (QKPT…LPAP), 9131–9158 (EFEP…QVVA), 9361–9459 (GKES…PDSD), 9502–9735 (LVED…TSIS), and 9769–9797 (TMQL…EQQL). Positions 8601-8611 (SNENTIDSSSM) are enriched in polar residues. The segment covering 8982 to 9011 (TQVTTTTRTTTATTQEQEQPEQQTQPTTTE) has biased composition (low complexity). Basic and acidic residues predominate over residues 9136-9151 (SPHEESTKSDLVKPQE). The segment covering 9394 to 9404 (KRRRKKKKRRD) has biased composition (basic residues). The span at 9410-9419 (ELEQEQETEP) shows a compositional bias: acidic residues. A compositionally biased stretch (low complexity) spans 9420–9439 (EPVAAVKEPEVSSDVPVSPE). Residues 9440-9451 (DSPRDTVRHESI) show a composition bias toward basic and acidic residues. Polar residues-rich tracts occupy residues 9544–9563 (AVQT…SQTL), 9587–9597 (ISTTEIQTDVS), and 9605–9625 (EISS…TTPK). Over residues 9658–9680 (TSEQSTVTETTTTTETHVQTTTP) the composition is skewed to low complexity. Basic and acidic residues predominate over residues 9681–9698 (EPREQTEVIKPETAHEET). An LRR 41 repeat occupies 9699 to 9721 (STVELVQFADGEMQTTPPGDQQP). Polar residues predominate over residues 9711–9735 (MQTTPPGDQQPASLDDSSLTATSIS). The span at 9777-9788 (KKSKKDKKKKQK) shows a compositional bias: basic residues. LRR repeat units follow at residues 9995 to 10019 (SNVL…ILEV), 10073 to 10096 (EEKL…VVQL), 10252 to 10276 (KEFT…SLEQ), and 10353 to 10376 (RDEL…TSAD). Coiled coils occupy residues 10072–10099 (SEEK…LERQ) and 10172–10257 (LSAK…FTKI). One copy of the TPR 15 repeat lies at 10231 to 10264 (QAERERVLQLQSLAEEYEQTLKEFTKITVLADKL). The HAT 8 repeat unit spans residues 10426 to 10458 (IVLLKLREEVALYLHRLLVFKEIWVQYEQQTDK). LRR repeat units lie at residues 10512-10535 (EKSL…QLED), 10570-10593 (EREL…EEEL), and 10644-10667 (AEEL…ISNQ). The stretch at 10854–10888 (VVAWNDTSENLQQLRTRYQRAVELWDKYRNASAAV) is one TPR 16 repeat. One copy of the HAT 9 repeat lies at 10855 to 10887 (VAWNDTSENLQQLRTRYQRAVELWDKYRNASAA). LRR repeat units lie at residues 10907 to 10929 (DALQ…ILEL) and 11021 to 11043 (AHLQ…HQNS). A coiled-coil region spans residues 11016–11046 (LAALRAHLQTLARTEEQLRQLKERHQNSEVA). The HAT 10 repeat unit spans residues 11070 to 11104 (DTFQEYHRLSTRLARSQNSSEALRLWRQYLQHVQS). The TPR 17 repeat unit spans residues 11072-11105 (FQEYHRLSTRLARSQNSSEALRLWRQYLQHVQSF). One copy of the LRR 51 repeat lies at 11197–11222 (EAERNALQLRYIHLKRVPHLKHRLDA). Coiled coils occupy residues 11220 to 11247 (LDAM…LARH) and 11281 to 11308 (LQRV…AQKL). LRR repeat units follow at residues 11342–11365 (SALE…DMKT), 11398–11422 (LSNY…VEKD), 11670–11692 (EELE…LAMS), 11697–11720 (PENI…LTPR), and 11744–11766 (EATN…ENQQ). A coiled-coil region spans residues 11655-11685 (KHKLEERQMELRAKLEELESQSVNLRQLEQI). Residues 11776 to 11806 (LQRLESLEKKLQDAQQHVQQADNLAQEAKTR) are a coiled coil. The stretch at 11804-11836 (KTRTKQQPQLKQLLELVSAYTTLWQTVQTRIVT) is one HAT 11 repeat. LRR repeat units lie at residues 11959-11981 (DTVA…RQQH) and 12198-12220 (SRLT…YIVK). Residues 12253-12272 (SMQAAAPNTENANNTDGGDA) form a disordered region. Low complexity predominate over residues 12256-12267 (AAAPNTENANNT). The 59-residue stretch at 12287–12345 (ARFLGRVARASLPIQALMLLLLGVATLVPHGEDYTCMFSNTFARSLEPMLSYPHGPPPT) folds into the KASH domain. A helical; Anchor for type IV membrane protein membrane pass occupies residues 12296 to 12316 (ASLPIQALMLLLLGVATLVPH). One copy of the LRR 59 repeat lies at 12301–12323 (QALMLLLLGVATLVPHGEDYTCM). The Perinuclear space segment spans residues 12317-12345 (GEDYTCMFSNTFARSLEPMLSYPHGPPPT).

It belongs to the nesprin family. In terms of assembly, core component of LINC complexes which are composed of inner nuclear membrane SUN domain-containing proteins coupled to outer nuclear membrane KASH domain-containing nesprins. Interacts with klar; this interaction allows the anchoring of the Msp300 nuclear ring structure to the nuclear envelope. Interacts with sls; this interaction mediates the recruitment of Msp300 to the Z-disks.

Its subcellular location is the nucleus membrane. It is found in the cytoplasm. The protein localises to the myofibril. The protein resides in the sarcomere. It localises to the z line. Its subcellular location is the cytoskeleton. It is found in the microtubule organizing center. The protein localises to the perinuclear region. Its function is as follows. Component of the LINC (LInker of Nucleoskeleton and Cytoskeleton) complex involved in the connection between the nuclear lamina and the cytoskeleton. Collaborates with Klar to promote even spacing of the myonuclei at the periphery of striated muscle fibers by mediating a tight association between a nuclear ring structure of Msp300 and the plus ends of a unique astral MT network. In addition, is essential for anchoring nuclei, mitochondria and endoplasmic reticulum (ER) structures to the Z-disks. In fat body cells, part of perinuclear non-centrosomal microtubule-organizing centers (ncMTOCs) which function to accommodate the organization of microtubule (MT) networks to control nuclear positioning and dynein motor-based retrograde endosomal trafficking. Functions as the primary organizer of the ncMTOC by recruiting Patronin, shot and msps to the organizing centre. Within the ncMTOC, Msp300 and shot anchors the ncMTOC at the nuclear surface and recruits the MT minus-end regulators Patronin and Nin for assembly, anchoring and/or stabilization of circumferential and radial MTs at the ncMTOCs. Patronin, and perhaps Nin, recruits msps to the ncMTOC for the gamma-tubulin-independent elongation of radial MTs. In Drosophila melanogaster (Fruit fly), this protein is Muscle-specific protein 300 kDa.